A 155-amino-acid chain; its full sequence is Endoribonuclease YbeY (155 aa).

Zn(2+) contacts are provided by His120, His124, and His130.

The protein belongs to the endoribonuclease YbeY family. Zn(2+) serves as cofactor.

Its subcellular location is the cytoplasm. In terms of biological role, single strand-specific metallo-endoribonuclease involved in late-stage 70S ribosome quality control and in maturation of the 3' terminus of the 16S rRNA. The chain is Endoribonuclease YbeY from Staphylococcus aureus (strain bovine RF122 / ET3-1).